The primary structure comprises 443 residues: Protoheme IX farnesyltransferase, mitochondrial (443 aa).

7 helical membrane-spanning segments follow: residues 174 to 194, 235 to 255, 257 to 277, 280 to 300, 309 to 329, 364 to 384, and 411 to 431; these read AAGF…LTSV, LAVS…TLGV, PLTG…YTPL, ISIA…VMGW, AGAF…FNAL, LLVL…FPIM, and LFFC…TCKR.

The protein belongs to the UbiA prenyltransferase family.

It localises to the mitochondrion membrane. The enzyme catalyses heme b + (2E,6E)-farnesyl diphosphate + H2O = Fe(II)-heme o + diphosphate. Its function is as follows. Converts protoheme IX and farnesyl diphosphate to heme O. This chain is Protoheme IX farnesyltransferase, mitochondrial (COX10), found in Homo sapiens (Human).